Reading from the N-terminus, the 101-residue chain is Small ribosomal subunit protein uS10 (101 aa).

This sequence belongs to the universal ribosomal protein uS10 family. As to quaternary structure, part of the 30S ribosomal subunit.

Functionally, involved in the binding of tRNA to the ribosomes. The chain is Small ribosomal subunit protein uS10 from Flavobacterium johnsoniae (strain ATCC 17061 / DSM 2064 / JCM 8514 / BCRC 14874 / CCUG 350202 / NBRC 14942 / NCIMB 11054 / UW101) (Cytophaga johnsonae).